A 90-amino-acid chain; its full sequence is uncharacterized protein (90 aa).

The segment at 1-26 (MFKRSVSRLFCAPAPAPAPRKQPGGR) is disordered. Residues 33–66 (NLNQSVKKQLNHLEVLERIKKQRKEQKNNRNQVD) are a coiled coil.

This is an uncharacterized protein from Dictyostelium discoideum (Social amoeba).